Reading from the N-terminus, the 1763-residue chain is MSQTLSFVLKTHSVRKDFVHSVKRTLQRRRDLQYLYNKLSRPIRAEACPSCASYDVCPNCTSGSIPDDGSSKGQIPSWEDVTKTSTYSLLLSEDTSDELHPDDLVNVAAHIRKALSTQSHPANVDMCKEQLTSLLVMAEAMLPQRSRSTLPLHQKYVAARLEWREKFFSKPLDFLLEKIGTSRDILQITAVWKIIIEKACYCKSYGEHWFEAAKQKLREIKSYEHNTLKPLIGAFIDGLRLMTIDNPNPMGFLPKLIGLIKPLNLAMIIDNHENTLSGWVITLTAIMELYNITECTIDVITSIITGFYDKIGKATKFYSQIKALFTGFRSEDVANSFWYMAAAILCYLITGLIPNNGRLSKIKACLAGATTLVSGIVATQKLAAMFATWNSESIVNELSARTVAISELNNPTTTSDTDSVERLLELAKILHEEIKIHTLNPIMQSYNPILRNLMSTLDGVITSCNKRKAIAKKRPVPVCYILTGPPGCGKTTAALALAKKLSDQEPSVINLDVDHHDTYTGNEVCIVDEFDSSDKVDYANFVIGMVNSAPMVLNCDMLENKGKLFTSKYIIMTSNSETPVKPSSRRAGAFYRRVTIIDVANPLAESHKRARPGTSVPRSCYKKNFSHLSLAKRGAECWCKEYVLDPKGLQHQSIKAPPPTFLNIDSLAQTMKQDFTLKNMAFEAENGHSEHRYGFVCQQGEVETVRRLLNAVRTRLNATFTVCVGSEASSSIGCTAHVLTPDEPFNGKKYVVSRCNEASLSALEGNCVQSALGVCMSTKDLTHLCHFIRGKIVNDSVRLDELPANQHVVTVNSVFDLAWALRRHLTLAGQFQAIRAAYDVLTAPDKVPAMLRHWMDETSFSDEHVVTQFVTPGGIVILESCGGARIWALGHNVIRAGGVTATPTGGCIRFMGLSAQTMPWSEIFRELFSLLGRIWSSIKVSTLVLTALGMYASRFRPKSEAKGKTKSKVGPYRGRGVALTDDEYDEWREHNATRKLDLSVEDFLMLRHRAALGADDADAVKFRSWWNSRSRLADDYEDVTVIGKGGVKHEKIRTNTLRAVDRGYDVSFAEESGPGTKFHKNAIGSVTDVCGEHKGYCVHMGHGVYATVAHVAKGDSFFLGERIFDLKTNGEFCCFRSTKILPSAAPFFPGKPTRDPWGSPVATEWKPKPYTTTSGKIVGCFATTSTETHPGDCGLPYIDDNGRVTGLHTGSGGPKTPSAKLVVPYVHIDMKTKSVTAQKYDVTKPDISYKGLICKQLDEIRIIPKGTRLHVSPAHTEDFEECSHQPASLGSGDPRCPKSLTAIVVDSLKPYCDKVEGPPHDILHRVQKMLIDHLSGFVPVNISSETSMLSAFHKLNHDTSCGPYLGGRKKDHMTNGEPDKPLLDLLSAKWKLATQGIALPHEYTIGLKDELRPVEKVAEGKRRMIWGCDVGVATVCAAAFKGVSDAITANHQYGPVQVGINMDSPSVEALHQRIKSAAKVYAVDYSKWDSTQSPRVSAASIDILRYFSDRSPIVDSAANTLKSPPIAIFNGVAVKVSSGLPSGMPLTSVINSLNHCLYVGCAILQSLEARGVPVTWNLFSTFDMMTYGDDGVYMFPMMFASVSDQIFANLSAYGLKPTRVDKSVGSIEPIDPESVVFLKRTITRTPQGIRGLLDRSSIIRQFYYIKGENSDDWKTPPKSIDPTSRGQQLWNACLYASQHGVEFYNKIYKLAQKAVEYEELHLEPPTYHSALEHYNNQFNGVEARSDQIDSSGMTALHCDVFEV.

The SF3 helicase domain occupies 458–614 (DGVITSCNKR…ESHKRARPGT (157 aa)). 484–491 (GPPGCGKT) serves as a coordination point for ATP. An O-(5'-phospho-RNA)-tyrosine modification is found at Tyr-984. At Thr-1040 the chain carries Phosphothreonine. Phosphoserine is present on Ser-1067. The Peptidase C24 domain maps to 1073-1229 (GPGTKFHKNA…KLVVPYVHID (157 aa)). Catalysis depends on for 3CLpro activity residues His-1110, Glu-1131, and Cys-1193. The region spanning 1478 to 1603 (AKVYAVDYSK…MFPMMFASVS (126 aa)) is the RdRp catalytic domain.

Homodimer. Interacts with NTPase, protein p30 and protease-polymerase p76. As to quaternary structure, interacts with capsid protein VP1 and protease-polymerase p76. Interacts with host IEF4e; this interaction plays a role in translation of viral proteins. In terms of assembly, homooligomer. Interacts with Vpg, protein p32 and may interact with capsid protein VP1. Post-translationally, specific enzymatic cleavages in vivo yield mature proteins. Pro-Pol is first autocatalytically cleaved, then processes the whole polyprotein. VPg is uridylylated by the polymerase and is covalently attached to the 5'-end of the polyadenylated genomic and subgenomic RNAs. This uridylylated form acts as a nucleotide-peptide primer for the polymerase.

It localises to the host endoplasmic reticulum membrane. The enzyme catalyses a ribonucleoside 5'-triphosphate + H2O = a ribonucleoside 5'-diphosphate + phosphate + H(+). It carries out the reaction RNA(n) + a ribonucleoside 5'-triphosphate = RNA(n+1) + diphosphate. It catalyses the reaction Endopeptidase with a preference for cleavage when the P1 position is occupied by Glu-|-Xaa and the P1' position is occupied by Gly-|-Yaa.. Its function is as follows. Together with NTPase and NS4, initiates the formation of the replication complex. Induces the proliferation of the host smooth ER membranes forming long tubular structures. These remodeled membranes probably form the viral factories that contain the replication complex. In terms of biological role, displays NTPase activity, but no helicase activity. Induces the formation of convoluted membranes derived from the host ER. These remodeled membranes probably form the viral factories that contain the replication complex. Together with NS2 and NS4, initiates the formation of the replication complex. Probable key protein responsible for the formation of membrane alterations by the virus. Induces the formation of convoluted membranes derived from the host ER. These remodeled membranes probably form the viral factories that contain the replication complex. Together with NS2 and NTPase, initiates the formation of the replication complex. Functionally, viral genome-linked protein is covalently linked to the 5'-end of the positive-strand, negative-strand genomic RNAs and subgenomic RNA. Acts as a genome-linked replication primer. May recruit ribosome to viral RNA thereby promoting viral proteins translation. Interacts with host translation initiation complex to allow the translation of viral proteins. Its function is as follows. Processes the polyprotein: Pro-Pol is first released by autocleavage, then all other proteins are cleaved. Cleaves host translation initiation factor eIF4G1, eIF4G2 and PABP1 thereby inducing a shutdown of host protein synthesis. This shutdown may not prevent viral mRNA from being translated since viral Vpg replaces the cap. Also functions as an RNA-directed RNA polymerase, which replicates genomic and antigenomic viral RNA by recognizing specific signals. Transcribes a subgenomic mRNA by initiating RNA synthesis internally on antigenomic RNA. This sgRNA codes for structural proteins. Catalyzes the covalent attachment VPg with viral RNAs. Cleaves host G3BP1 thereby preventing the assembly of host stress granules. This Feline calicivirus (strain Cat/United States/Urbana/1960) (FCV) protein is Genome polyprotein.